The chain runs to 382 residues: Deoxyuridine 5'-triphosphate nucleotidohydrolase (382 aa).

The span at 1–12 (MIKPNIPAPVRP) shows a compositional bias: pro residues. Disordered regions lie at residues 1–60 (MIKP…MMIS) and 97–118 (LLRD…RRPE). The segment covering 100–118 (DGPEAPPREPTPKEARRPE) has biased composition (basic and acidic residues).

It belongs to the dUTPase family. Requires Mg(2+) as cofactor.

It carries out the reaction dUTP + H2O = dUMP + diphosphate + H(+). It functions in the pathway pyrimidine metabolism; dUMP biosynthesis; dUMP from dCTP (dUTP route): step 2/2. Functionally, involved in nucleotide metabolism: produces dUMP, the immediate precursor of thymidine nucleotides and decreases the intracellular concentration of dUTP to avoid uracil incorporation into viral DNA. This chain is Deoxyuridine 5'-triphosphate nucleotidohydrolase, found in Murid herpesvirus 1 (strain Smith) (MuHV-1).